A 209-amino-acid polypeptide reads, in one-letter code: Pyridoxine/pyridoxamine 5'-phosphate oxidase (209 aa).

Substrate contacts are provided by residues 5–8 (REEY) and Lys-63. FMN-binding positions include 58–63 (RVVLLK), 73–74 (FT), Arg-79, Lys-80, and Gln-102. 3 residues coordinate substrate: Tyr-120, Arg-124, and Ser-128. FMN is bound by residues 137–138 (QS) and Trp-181. Residue 187-189 (RLH) coordinates substrate. Arg-191 is an FMN binding site.

Belongs to the pyridoxamine 5'-phosphate oxidase family. In terms of assembly, homodimer. It depends on FMN as a cofactor.

It catalyses the reaction pyridoxamine 5'-phosphate + O2 + H2O = pyridoxal 5'-phosphate + H2O2 + NH4(+). The catalysed reaction is pyridoxine 5'-phosphate + O2 = pyridoxal 5'-phosphate + H2O2. It participates in cofactor metabolism; pyridoxal 5'-phosphate salvage; pyridoxal 5'-phosphate from pyridoxamine 5'-phosphate: step 1/1. The protein operates within cofactor metabolism; pyridoxal 5'-phosphate salvage; pyridoxal 5'-phosphate from pyridoxine 5'-phosphate: step 1/1. Functionally, catalyzes the oxidation of either pyridoxine 5'-phosphate (PNP) or pyridoxamine 5'-phosphate (PMP) into pyridoxal 5'-phosphate (PLP). This chain is Pyridoxine/pyridoxamine 5'-phosphate oxidase, found in Alcanivorax borkumensis (strain ATCC 700651 / DSM 11573 / NCIMB 13689 / SK2).